Reading from the N-terminus, the 235-residue chain is Glucosamine-6-phosphate deaminase (235 aa).

Aspartate 62 serves as the catalytic Proton acceptor; for enolization step. Residue asparagine 128 is the For ring-opening step of the active site. The Proton acceptor; for ring-opening step role is filled by histidine 130. Glutamate 135 functions as the For ring-opening step in the catalytic mechanism.

This sequence belongs to the glucosamine/galactosamine-6-phosphate isomerase family. NagB subfamily.

It carries out the reaction alpha-D-glucosamine 6-phosphate + H2O = beta-D-fructose 6-phosphate + NH4(+). It functions in the pathway amino-sugar metabolism; N-acetylneuraminate degradation; D-fructose 6-phosphate from N-acetylneuraminate: step 5/5. Functionally, catalyzes the reversible isomerization-deamination of glucosamine 6-phosphate (GlcN6P) to form fructose 6-phosphate (Fru6P) and ammonium ion. This is Glucosamine-6-phosphate deaminase from Streptococcus pneumoniae (strain JJA).